Reading from the N-terminus, the 201-residue chain is Adenylyl-sulfate kinase (201 aa).

Residue 35 to 42 (GLSGSGKS) coordinates ATP. S109 serves as the catalytic Phosphoserine intermediate.

It belongs to the APS kinase family.

The enzyme catalyses adenosine 5'-phosphosulfate + ATP = 3'-phosphoadenylyl sulfate + ADP + H(+). The protein operates within sulfur metabolism; hydrogen sulfide biosynthesis; sulfite from sulfate: step 2/3. In terms of biological role, catalyzes the synthesis of activated sulfate. The protein is Adenylyl-sulfate kinase of Bacteroides thetaiotaomicron (strain ATCC 29148 / DSM 2079 / JCM 5827 / CCUG 10774 / NCTC 10582 / VPI-5482 / E50).